Consider the following 620-residue polypeptide: Chaperone protein HscA homolog (620 aa).

It belongs to the heat shock protein 70 family.

Chaperone involved in the maturation of iron-sulfur cluster-containing proteins. Has a low intrinsic ATPase activity which is markedly stimulated by HscB. The protein is Chaperone protein HscA homolog of Shewanella sediminis (strain HAW-EB3).